The following is a 70-amino-acid chain: Movement protein TGBp3 (70 aa).

Residues 1–4 (MFPR) are Lumenal-facing. The helical transmembrane segment at 5–25 (SGLGLAVAAAVVAYLVLLLAQ) threads the bilayer. Over 26 to 70 (QLYMSNSSQCTIVITGESVSVVGCVYSEAFIELVKGLKPYYHPLG) the chain is Cytoplasmic.

This sequence belongs to the Tymovirales TGBp3 protein family.

It is found in the host endoplasmic reticulum membrane. Plays a role in viral cell-to-cell propagation, by facilitating genome transport to neighboring plant cells through plasmosdesmata. May induce the formation of granular vesicles derived from the Endoplasmic reticulum, which align on actin filaments. The sequence is that of Movement protein TGBp3 from Crataegus (hawthorn).